We begin with the raw amino-acid sequence, 167 residues long: Large ribosomal subunit protein bL9 (167 aa).

Belongs to the bacterial ribosomal protein bL9 family.

Binds to the 23S rRNA. The polypeptide is Large ribosomal subunit protein bL9 (Chlamydia trachomatis serovar L2 (strain ATCC VR-902B / DSM 19102 / 434/Bu)).